The chain runs to 263 residues: Acetylglutamate kinase (263 aa).

Residues 48–49, Arg-70, and Asn-162 each bind substrate; that span reads GG.

The protein belongs to the acetylglutamate kinase family. ArgB subfamily.

The protein localises to the cytoplasm. The enzyme catalyses N-acetyl-L-glutamate + ATP = N-acetyl-L-glutamyl 5-phosphate + ADP. Its pathway is amino-acid biosynthesis; L-arginine biosynthesis; N(2)-acetyl-L-ornithine from L-glutamate: step 2/4. Its function is as follows. Catalyzes the ATP-dependent phosphorylation of N-acetyl-L-glutamate. This Vibrio campbellii (strain ATCC BAA-1116) protein is Acetylglutamate kinase.